The sequence spans 307 residues: MVEPMNWISEVVRPRIKTLFKRETPENLWVKCPDTGQMVFHKEVEQNHWVIPGSEHHLKMSATARLKMMFDEGTWIDVPLPEVPADPLKFRDEKRYVDRLKEARAKTGMPDAFKIGFGRVGSLPMTIAAQEFGFMAGSLGMAGGEAFVRGAETALEKRTPYVLFAASGGARMQEGILSLMQMPRTTVAVRRLRAARLPYIVVLTNPTTGGVTASYAMLGDVHLAEPGALICFAGPRVIEQTIREKLPDGFQRAEYLREHGMVDQVVHRHQLKETISRLCGLLMDVRRTPEPGTAPEPTTPEPLPNAA.

In terms of domain architecture, CoA carboxyltransferase N-terminal spans 28–297 (LWVKCPDTGQ…TPEPGTAPEP (270 aa)). Residues 286 to 307 (RRTPEPGTAPEPTTPEPLPNAA) form a disordered region. The span at 292–307 (GTAPEPTTPEPLPNAA) shows a compositional bias: pro residues.

The protein belongs to the AccD/PCCB family. Acetyl-CoA carboxylase is a heterohexamer composed of biotin carboxyl carrier protein (AccB), biotin carboxylase (AccC) and two subunits each of ACCase subunit alpha (AccA) and ACCase subunit beta (AccD).

The protein localises to the cytoplasm. The catalysed reaction is N(6)-carboxybiotinyl-L-lysyl-[protein] + acetyl-CoA = N(6)-biotinyl-L-lysyl-[protein] + malonyl-CoA. It functions in the pathway lipid metabolism; malonyl-CoA biosynthesis; malonyl-CoA from acetyl-CoA: step 1/1. Functionally, component of the acetyl coenzyme A carboxylase (ACC) complex. Biotin carboxylase (BC) catalyzes the carboxylation of biotin on its carrier protein (BCCP) and then the CO(2) group is transferred by the transcarboxylase to acetyl-CoA to form malonyl-CoA. In Methylorubrum extorquens (strain ATCC 14718 / DSM 1338 / JCM 2805 / NCIMB 9133 / AM1) (Methylobacterium extorquens), this protein is Acetyl-coenzyme A carboxylase carboxyl transferase subunit beta.